A 162-amino-acid chain; its full sequence is Shikimate kinase (162 aa).

ATP is bound at residue 11–16 (GSGKSS). Mg(2+) is bound at residue Ser-15. Substrate is bound by residues Asp-33, Arg-57, and Gly-80. Arg-116 serves as a coordination point for ATP. Arg-132 contributes to the substrate binding site.

Belongs to the shikimate kinase family. As to quaternary structure, monomer. Mg(2+) serves as cofactor.

It localises to the cytoplasm. The catalysed reaction is shikimate + ATP = 3-phosphoshikimate + ADP + H(+). Its pathway is metabolic intermediate biosynthesis; chorismate biosynthesis; chorismate from D-erythrose 4-phosphate and phosphoenolpyruvate: step 5/7. Its function is as follows. Catalyzes the specific phosphorylation of the 3-hydroxyl group of shikimic acid using ATP as a cosubstrate. This Helicobacter pylori (strain P12) protein is Shikimate kinase.